The following is a 460-amino-acid chain: Serine--tRNA ligase (460 aa).

Over residues 50–65 the composition is skewed to basic and acidic residues; that stretch reads DRNEVSSKIGELKQAG. 2 disordered regions span residues 50–71 and 109–129; these read DRNE…DAAQ and PDED…RREG. Acidic residues predominate over residues 109–121; the sequence is PDEDAPVGDSEAE. Position 241-243 (241-243) interacts with L-serine; it reads TAE. ATP contacts are provided by residues 272-274 and valine 288; that span reads RRE. Glutamate 295 is a binding site for L-serine. 368–371 provides a ligand contact to ATP; it reads EVSS. Serine 404 contributes to the L-serine binding site.

This sequence belongs to the class-II aminoacyl-tRNA synthetase family. Type-1 seryl-tRNA synthetase subfamily. In terms of assembly, homodimer. The tRNA molecule binds across the dimer.

It localises to the cytoplasm. It carries out the reaction tRNA(Ser) + L-serine + ATP = L-seryl-tRNA(Ser) + AMP + diphosphate + H(+). It catalyses the reaction tRNA(Sec) + L-serine + ATP = L-seryl-tRNA(Sec) + AMP + diphosphate + H(+). The protein operates within aminoacyl-tRNA biosynthesis; selenocysteinyl-tRNA(Sec) biosynthesis; L-seryl-tRNA(Sec) from L-serine and tRNA(Sec): step 1/1. In terms of biological role, catalyzes the attachment of serine to tRNA(Ser). Is also able to aminoacylate tRNA(Sec) with serine, to form the misacylated tRNA L-seryl-tRNA(Sec), which will be further converted into selenocysteinyl-tRNA(Sec). This is Serine--tRNA ligase from Halobacterium salinarum (strain ATCC 29341 / DSM 671 / R1).